A 372-amino-acid polypeptide reads, in one-letter code: SAM domain-containing protein SAMSN-1 (372 aa).

The tract at residues 1-71 (MLKRKPSNAS…SGGSLGKKVR (71 aa)) is disordered. Positions 20-25 (RSSSFG) match the Important for interaction with 14-3-3 proteins motif. Ser-23 and Ser-34 each carry phosphoserine. Residues 37–49 (KSDDSIEVHDREL) show a composition bias toward basic and acidic residues. Residues 52-63 (GSEEQSKTSSSG) show a composition bias toward low complexity. The residue at position 74 (Ser-74) is a Phosphoserine. At Thr-76 the chain carries Phosphothreonine. A phosphoserine mark is found at Ser-90, Ser-97, and Ser-119. Residues 90–111 (SEEKEEESGEEALPYRNSDPMI) form a disordered region. Residues 129 to 146 (LYSGQSSSSGITSCSDGT) are compositionally biased toward low complexity. The tract at residues 129-153 (LYSGQSSSSGITSCSDGTSNRDSFR) is disordered. Tyr-160 is subject to Phosphotyrosine. The 62-residue stretch at 163–224 (PFCGRAKVHT…KFIYVDVILE (62 aa)) folds into the SH3 domain. Residues 241–305 (ENHQTIQEFL…LSAAESLLDE (65 aa)) enclose the SAM domain. The segment at 304-372 (DEETTVEHEK…QKIAITESSD (69 aa)) is disordered. Polar residues predominate over residues 317–329 (PLSSNPDILSASQ).

As to quaternary structure, interacts with FASLG. Interacts with phosphotyrosine containing proteins. Interacts (via SH3 domain) with CTTN. Interacts (phosphorylated at Ser-23) with YWHAB, YWHAE, YWHAG, YWHAH, YWHAZ and SFN. Interacts directly with SAP30 and HDAC1. Identified in a complex with SAP30 and HDAC1. As to expression, detected in spleen and lymph node (at protein level).

The protein resides in the nucleus. Its subcellular location is the cytoplasm. The protein localises to the cell projection. It localises to the ruffle. Its function is as follows. Negative regulator of B-cell activation. Down-regulates cell proliferation (in vitro). Promotes RAC1-dependent membrane ruffle formation and reorganization of the actin cytoskeleton. Regulates cell spreading and cell polarization. Stimulates HDAC1 activity. Regulates LYN activity by modulating its tyrosine phosphorylation. This is SAM domain-containing protein SAMSN-1 (Samsn1) from Mus musculus (Mouse).